The primary structure comprises 534 residues: CTP synthase (534 aa).

The tract at residues 1-267 is amidoligase domain; it reads MTKYIFVTGG…DQIVCDHLKL (267 aa). Serine 13 provides a ligand contact to CTP. Serine 13 is a binding site for UTP. 14-19 lines the ATP pocket; it reads SIGKGI. Position 54 (tyrosine 54) interacts with L-glutamine. Aspartate 71 is a binding site for ATP. 2 residues coordinate Mg(2+): aspartate 71 and glutamate 141. CTP is bound by residues 148 to 150, 188 to 193, and lysine 224; these read DIE and KTKPTQ. UTP-binding positions include 188-193 and lysine 224; that span reads KTKPTQ. The Glutamine amidotransferase type-1 domain maps to 292 to 534; the sequence is KIALVGKYVE…FVTAAVENMK (243 aa). Glycine 354 lines the L-glutamine pocket. Cysteine 381 functions as the Nucleophile; for glutamine hydrolysis in the catalytic mechanism. Residues 382–385, glutamate 405, and arginine 463 contribute to the L-glutamine site; that span reads LGMQ. Active-site residues include histidine 508 and glutamate 510.

The protein belongs to the CTP synthase family. In terms of assembly, homotetramer.

The catalysed reaction is UTP + L-glutamine + ATP + H2O = CTP + L-glutamate + ADP + phosphate + 2 H(+). It carries out the reaction L-glutamine + H2O = L-glutamate + NH4(+). It catalyses the reaction UTP + NH4(+) + ATP = CTP + ADP + phosphate + 2 H(+). It participates in pyrimidine metabolism; CTP biosynthesis via de novo pathway; CTP from UDP: step 2/2. With respect to regulation, allosterically activated by GTP, when glutamine is the substrate; GTP has no effect on the reaction when ammonia is the substrate. The allosteric effector GTP functions by stabilizing the protein conformation that binds the tetrahedral intermediate(s) formed during glutamine hydrolysis. Inhibited by the product CTP, via allosteric rather than competitive inhibition. Catalyzes the ATP-dependent amination of UTP to CTP with either L-glutamine or ammonia as the source of nitrogen. Regulates intracellular CTP levels through interactions with the four ribonucleotide triphosphates. The chain is CTP synthase from Streptococcus agalactiae serotype V (strain ATCC BAA-611 / 2603 V/R).